A 156-amino-acid polypeptide reads, in one-letter code: ATP synthase subunit b (156 aa).

Residues 7 to 27 (LIAQFVVFFILAGFTMKFVWP) traverse the membrane as a helical segment.

Belongs to the ATPase B chain family. F-type ATPases have 2 components, F(1) - the catalytic core - and F(0) - the membrane proton channel. F(1) has five subunits: alpha(3), beta(3), gamma(1), delta(1), epsilon(1). F(0) has three main subunits: a(1), b(2) and c(10-14). The alpha and beta chains form an alternating ring which encloses part of the gamma chain. F(1) is attached to F(0) by a central stalk formed by the gamma and epsilon chains, while a peripheral stalk is formed by the delta and b chains.

Its subcellular location is the cell inner membrane. Its function is as follows. F(1)F(0) ATP synthase produces ATP from ADP in the presence of a proton or sodium gradient. F-type ATPases consist of two structural domains, F(1) containing the extramembraneous catalytic core and F(0) containing the membrane proton channel, linked together by a central stalk and a peripheral stalk. During catalysis, ATP synthesis in the catalytic domain of F(1) is coupled via a rotary mechanism of the central stalk subunits to proton translocation. In terms of biological role, component of the F(0) channel, it forms part of the peripheral stalk, linking F(1) to F(0). The sequence is that of ATP synthase subunit b from Herminiimonas arsenicoxydans.